The primary structure comprises 140 residues: Lysozyme B (140 aa).

Positions 1 to 18 (MKAFIVLVALALAAPALG) are cleaved as a signal peptide. One can recognise a C-type lysozyme domain in the interval 19 to 140 (RTMDRCSLAR…GWLPSIDDCF (122 aa)). Cystine bridges form between Cys-24-Cys-139, Cys-45-Cys-129, Cys-80-Cys-96, and Cys-92-Cys-110. Catalysis depends on residues Glu-50 and Asp-68.

Belongs to the glycosyl hydrolase 22 family. As to expression, found in the midgut.

The catalysed reaction is Hydrolysis of (1-&gt;4)-beta-linkages between N-acetylmuramic acid and N-acetyl-D-glucosamine residues in a peptidoglycan and between N-acetyl-D-glucosamine residues in chitodextrins.. Its function is as follows. Unlikely to play an active role in the humoral immune defense. May have a function in the digestion of bacteria in the food. This chain is Lysozyme B (LysB), found in Drosophila melanogaster (Fruit fly).